Here is a 325-residue protein sequence, read N- to C-terminus: Succinylglutamate desuccinylase (325 aa).

Zn(2+) is bound by residues His51, Glu54, and His148. Glu211 is an active-site residue.

This sequence belongs to the AspA/AstE family. Succinylglutamate desuccinylase subfamily. The cofactor is Zn(2+).

The enzyme catalyses N-succinyl-L-glutamate + H2O = L-glutamate + succinate. It participates in amino-acid degradation; L-arginine degradation via AST pathway; L-glutamate and succinate from L-arginine: step 5/5. In terms of biological role, transforms N(2)-succinylglutamate into succinate and glutamate. In Photorhabdus laumondii subsp. laumondii (strain DSM 15139 / CIP 105565 / TT01) (Photorhabdus luminescens subsp. laumondii), this protein is Succinylglutamate desuccinylase.